The sequence spans 2962 residues: Sex determination and dosage compensation protein sdc-2 (2962 aa).

Disordered stretches follow at residues 1 to 28 (MSDE…ADPD) and 1061 to 1110 (DKRS…QVDP). Positions 15–27 (SFNESDSPDEADP) are enriched in acidic residues. Coiled-coil stretches lie at residues 995-1085 (LESA…LADK) and 1140-1268 (REER…KRVS). Disordered regions lie at residues 1535–1554 (PASL…GSPV) and 2198–2227 (LDSS…NQLD). Residues 2212 to 2225 (FEDSPSEDENDENQ) are compositionally biased toward acidic residues.

As to quaternary structure, component of the SDC complex, which consists of sdc-1, sdc-2 and sdc-3. Within the complex, interacts with sdc-1 and sdc-3. Expressed in hermaphrodites (XX), but absent in males (XO) (at protein level).

The protein resides in the chromosome. Functionally, component of the SDC complex that functions in sex determination and in X chromosome dosage compensation specifically in hermaphrodite (XX) animals. Required for the recruitment of the condensin I-like dosage compensation complex to the male sex-determining autosomal gene her-1, thereby contributing to its repression and initiating hermaphrodite sexual development. Plays a central role in X-chromosome recognition and in the recruitment and assembly of the dosage compensation complex and the dosage compensation protein dpy-21 onto the X chromosomes in hermaphrodites, which leads to a reduction of X-linked gene transcription and an equalization of X-linked gene expression between the sexes. May confer protection against toxicity induced by heavy metals such as arsenite. This is Sex determination and dosage compensation protein sdc-2 from Caenorhabditis elegans.